We begin with the raw amino-acid sequence, 785 residues long: B-cell scaffold protein with ankyrin repeats (785 aa).

An interaction with ITPR2 region spans residues Met-1–Ile-154. A TIR domain is found at Asn-25 to Ile-153. The 128-residue stretch at Val-200–Leu-327 folds into the DBB domain. ANK repeat units lie at residues Glu-342–Ala-371 and Glu-378–Ile-408. Disordered regions lie at residues Pro-433–Ser-480, Gly-493–Pro-514, Gln-538–Tyr-578, and Phe-606–Glu-625. Basic and acidic residues predominate over residues Glu-553–Glu-568. Over residues Lys-569–Tyr-578 the composition is skewed to acidic residues. Over residues Pro-611 to Ile-621 the composition is skewed to pro residues.

In terms of assembly, interacts with LYN, ITPR1 and ITPR2. Phosphorylated on tyrosines upon BCR activation. In terms of tissue distribution, expressed in B-cell but not T-cell or myeloid cell lines. Highest expression in CD19(+) B-cells, with very low expression in other cell populations.

In terms of biological role, involved in B-cell receptor (BCR)-induced Ca(2+) mobilization from intracellular stores. Promotes Lyn-mediated phosphorylation of IP3 receptors 1 and 2. In Homo sapiens (Human), this protein is B-cell scaffold protein with ankyrin repeats (BANK1).